The chain runs to 421 residues: Inner membrane transport protein YdiN (421 aa).

Residues 1–9 (MSQNKAFST) are Cytoplasmic-facing. Residues 10–30 (PFILAVLCIYFSYFLHGISVI) traverse the membrane as a helical segment. The Periplasmic segment spans residues 31–49 (TLAQNMSSLAEKFSTDNAG). The helical transmembrane segment at 50 to 70 (IAYLISGIGLGRLISILFFGV) threads the bilayer. Residues 71-78 (ISDKFGRR) are Cytoplasmic-facing. The helical transmembrane segment at 79 to 99 (AVILMAVIMYLLFFFGIPACP) threads the bilayer. A topological domain (periplasmic) is located at residue asparagine 100. The chain crosses the membrane as a helical span at residues 101–121 (LTLAYGLAVCVGIANSALDTG). At 122–136 (GYPALMECFPKASGS) the chain is on the cytoplasmic side. Residues 137-157 (AVILVKAMVSFGQMFYPMLVS) form a helical membrane-spanning segment. The Periplasmic segment spans residues 158–163 (YMLLNN). A helical transmembrane segment spans residues 164–184 (IWYGYGLIIPGILFVLITLML). At 185-215 (LKSKFPSQLVDASVTNELPQMNSKPLVWLEG) the chain is on the cytoplasmic side. The helical transmembrane segment at 216 to 236 (VSSVLFGVAAFSTFYVIVVWM) threads the bilayer. The Periplasmic segment spans residues 237–251 (PKYAMAFAGMSEAEA). A helical transmembrane segment spans residues 252–272 (LKTISYYSMGSLVCVFIFAAL). At 273-279 (LKKMVRP) the chain is on the cytoplasmic side. Residues 280 to 300 (IWANVFNSALATITAAIIYLY) traverse the membrane as a helical segment. Topologically, residues 301–308 (PSPLVCNA) are periplasmic. Residues 309–329 (GAFVIGFSAAGGILQLGVSVM) form a helical membrane-spanning segment. Residues 330 to 342 (SEFFPKSKAKVTS) are Cytoplasmic-facing. Residues 343 to 363 (IYMMMGGLANFVIPLITGYLS) traverse the membrane as a helical segment. Residues 364 to 369 (NIGLQY) are Periplasmic-facing. The chain crosses the membrane as a helical span at residues 370-390 (IIVLDFTFALLALITAIIVFI). Over 391-421 (RYYRVFIIPENDVRFGERKFCTRLNTIKHRG) the chain is Cytoplasmic.

This sequence belongs to the major facilitator superfamily.

The protein localises to the cell inner membrane. In Escherichia coli (strain K12), this protein is Inner membrane transport protein YdiN (ydiN).